Consider the following 86-residue polypeptide: Large ribosomal subunit protein bL27 (86 aa).

This sequence belongs to the bacterial ribosomal protein bL27 family.

This is Large ribosomal subunit protein bL27 from Cupriavidus metallidurans (strain ATCC 43123 / DSM 2839 / NBRC 102507 / CH34) (Ralstonia metallidurans).